A 597-amino-acid chain; its full sequence is (E)-sabinene hydrate synthase, chloroplastic (597 aa).

The transit peptide at 1-47 directs the protein to the chloroplast; that stretch reads MSTISINHVGILRNPLQCKNKRTSINKPWSLSLPRSSPASRLVKPCR. Mn(2+)-binding residues include Asp353 and Asp357. The DDXXD motif signature appears at 353–357; that stretch reads DDVYD. 2 homodimerization regions span residues 359–365 and 431–468; these read YGTLDEL and EAGW…VSLP. Asp495 and Glu503 together coordinate Mn(2+).

The protein belongs to the terpene synthase family. Homodimer. Requires Mn(2+) as cofactor. Mg(2+) is required as a cofactor.

The protein resides in the plastid. The protein localises to the chloroplast. The enzyme catalyses (2E)-geranyl diphosphate + H2O = sabinene hydrate + diphosphate. It functions in the pathway secondary metabolite biosynthesis; terpenoid biosynthesis. In terms of biological role, involved in the biosynthesis of phenolic monoterpenes natural products. Monoterpene synthase which catalyzes the conversion of geranyl diphosphate (GPP) to sabinene hydrate, specifically (E)-sabinene hydrate, and the formation of minor amounts and traces of several other monoterpenes (e.g. mainly alpha-pinene, limonene and alpha-terpineol). In Thymus vulgaris (Thyme), this protein is (E)-sabinene hydrate synthase, chloroplastic.